We begin with the raw amino-acid sequence, 96 residues long: UPF0235 protein YggU (96 aa).

This sequence belongs to the UPF0235 family.

The protein is UPF0235 protein YggU of Salmonella arizonae (strain ATCC BAA-731 / CDC346-86 / RSK2980).